The chain runs to 979 residues: Protein SMAX1-LIKE 6 (979 aa).

The Clp R domain occupies 8–190 (ARECLTEEAA…PVTQLSSRFS (183 aa)). Repeat regions lie at residues 12-86 (LTEE…LDRL) and 100-190 (VSNS…SRFS). The short motif at 833-837 (LDLNL) is the EAR element.

The protein belongs to the ClpA/ClpB family. Interacts with TPL/TPR in an EAR-motif dependent manner. Interacts with TPR3. Interacts with MAX2 and TPR2. Interacts with D14. The interaction with D14 occurs in the presence of (2'R) stereoisomers of strigolactones, but not (2'S) stereoisomers. Ubiquitinated upon strigolactone treatment. Probable proteolytic target of SCF(MAX2)-mediated stigolactone signaling. Detected in roots, seedlings and axillary branches. Expressed in the primary rosette buds and expanding leaves of adult rosettes, the vasculature of the hypocotyls, cotyledons, and mature roots, and in the midvein and petioles of young leaves.

The protein localises to the nucleus. In terms of biological role, probable component of a transcriptional corepressor complex involved in branching control. Regulates cotyledon expansion and lateral root growth, but not germination or hypocotyl elongation. Promotes auxin transport and PIN1 accumulation in the stem and represses BRC1/TCP18 expression in axillary buds. The chain is Protein SMAX1-LIKE 6 from Arabidopsis thaliana (Mouse-ear cress).